We begin with the raw amino-acid sequence, 435 residues long: MTTVSYVTILLTVLVQVLTSDAKATNNKRELSSGLKERSLSDDAPQFWKGRFSRSEEDPQFWKGRFSDPQFWKGRFSDPQFWKGRFSDPQFWKGRFSDPQFWKGRFSDPQFWKGRFSDPQFWKGRFSDGTKRENDPQYWKGRFSRSFEDQPDSEAQFWKGRFARTSSGEKREPQYWKGRFSRDSVPGRYGRELQGRFGRELQGRFGREAQGRFGRELQGRFGREFQGRFGREDQGRFGREDQGRFGREDQGRFGREDQGRFGREDQGRFGREDQGRFGRELQGRFGREFQGRFGREDQGRFGREDQGRFGRELQGRFGREDQGRFGREDQGRFGREDLAKEDQGRFGREDLAKEDQGRFGREDIAEADQGRFGRNAAAAAAAAAAAKKRTIDVIDIESDPKPQTRFRDGKDMQEKRKVEKKDKIEKSDDALAKTS.

An N-terminal signal peptide occupies residues M1–A22. The propeptide occupies K23–L193. Q194 is subject to Pyrrolidone carboxylic acid. At F197 the chain carries Phenylalanine amide. A propeptide spanning residues R199–L201 is cleaved from the precursor. F205 bears the Phenylalanine amide mark. The propeptide occupies R207–A209. Residue F213 is modified to Phenylalanine amide. Residues R215–L217 constitute a propeptide that is removed on maturation. Position 221 is a phenylalanine amide (F221). The propeptide occupies R223 to F225. The residue at position 229 (F229) is a Phenylalanine amide. Residues G230–R371 are compositionally biased toward basic and acidic residues. 2 disordered regions span residues G230–R374 and A386–S435. A propeptide spanning residues R231–D233 is cleaved from the precursor. F237 carries the post-translational modification Phenylalanine amide. Positions R239 to D241 are excised as a propeptide. F245 carries the phenylalanine amide modification. Positions R247 to D249 are excised as a propeptide. F253 is modified (phenylalanine amide). Residues R255–D257 constitute a propeptide that is removed on maturation. The residue at position 261 (F261) is a Phenylalanine amide. The propeptide occupies R263 to D265. F269 carries the phenylalanine amide modification. Residues R271–D273 constitute a propeptide that is removed on maturation. F277 carries the phenylalanine amide modification. Residues R279 to L281 constitute a propeptide that is removed on maturation. Phenylalanine amide is present on F285. Positions R287 to F289 are excised as a propeptide. F293 is subject to Phenylalanine amide. A propeptide spanning residues R295–D297 is cleaved from the precursor. F301 carries the post-translational modification Phenylalanine amide. The propeptide occupies R303–D305. F309 is modified (phenylalanine amide). The propeptide occupies R311 to L313. The residue at position 317 (F317) is a Phenylalanine amide. Positions R319 to D321 are excised as a propeptide. F325 is modified (phenylalanine amide). Residues R327 to D329 constitute a propeptide that is removed on maturation. F333 is subject to Phenylalanine amide. The propeptide occupies R335 to D342. F346 is subject to Phenylalanine amide. Residues R348–D355 constitute a propeptide that is removed on maturation. A Phenylalanine amide modification is found at F359. Positions R361–D368 are excised as a propeptide. Position 372 is a phenylalanine amide (F372). Positions R374 to S435 are excised as a propeptide. Over residues S398 to S435 the composition is skewed to basic and acidic residues.

It belongs to the FARP (FMRFamide related peptide) family.

It localises to the secreted. In terms of biological role, not known but it could act as a transmitter at neuromuscular synapses. The chain is Antho-RFamide neuropeptides type 1 from Anthopleura elegantissima (Green aggregating anemone).